We begin with the raw amino-acid sequence, 245 residues long: DNA repair protein RecO (245 aa).

Belongs to the RecO family.

Functionally, involved in DNA repair and RecF pathway recombination. This chain is DNA repair protein RecO, found in Porphyromonas gingivalis (strain ATCC 33277 / DSM 20709 / CIP 103683 / JCM 12257 / NCTC 11834 / 2561).